We begin with the raw amino-acid sequence, 531 residues long: Lysine--tRNA ligase, mitochondrial (531 aa).

The N-terminal 18 residues, 1-18 (MISRGLLSKGILSIIKRK), are a transit peptide targeting the mitochondrion.

This sequence belongs to the class-II aminoacyl-tRNA synthetase family.

It localises to the mitochondrion. The catalysed reaction is tRNA(Lys) + L-lysine + ATP = L-lysyl-tRNA(Lys) + AMP + diphosphate. In Schizosaccharomyces pombe (strain 972 / ATCC 24843) (Fission yeast), this protein is Lysine--tRNA ligase, mitochondrial (msk1).